The sequence spans 119 residues: Hydrogenase maturation factor HypA (119 aa).

Histidine 2 provides a ligand contact to Ni(2+). Residues cysteine 73, cysteine 76, cysteine 89, and cysteine 92 each coordinate Zn(2+).

Belongs to the HypA/HybF family.

Its function is as follows. Involved in the maturation of [NiFe] hydrogenases. Required for nickel insertion into the metal center of the hydrogenase. The protein is Hydrogenase maturation factor HypA of Dehalococcoides mccartyi (strain ATCC BAA-2266 / KCTC 15142 / 195) (Dehalococcoides ethenogenes (strain 195)).